Consider the following 495-residue polypeptide: UDP-glycosyltransferase 73C9 (495 aa).

A UDP-alpha-D-glucose-binding site is contributed by glycine 23–isoleucine 26. The Proton acceptor role is filled by histidine 24. Aspartate 129 acts as the Charge relay in catalysis. Residues tryptophan 355–glutamine 358, histidine 373–glutamate 381, and aspartate 397–glutamine 398 each bind UDP-alpha-D-glucose.

This sequence belongs to the UDP-glycosyltransferase family.

Functionally, possesses very weak glucosyltransferase activity toward 2,4,5-trichlorophenol (TCP), when assayed with high concentrations of TCP. This chain is UDP-glycosyltransferase 73C9, found in Barbarea vulgaris (Yellow rocket).